Here is a 444-residue protein sequence, read N- to C-terminus: Exodeoxyribonuclease 7 large subunit (444 aa).

Belongs to the XseA family. Heterooligomer composed of large and small subunits.

The protein resides in the cytoplasm. The enzyme catalyses Exonucleolytic cleavage in either 5'- to 3'- or 3'- to 5'-direction to yield nucleoside 5'-phosphates.. Functionally, bidirectionally degrades single-stranded DNA into large acid-insoluble oligonucleotides, which are then degraded further into small acid-soluble oligonucleotides. In Rickettsia conorii (strain ATCC VR-613 / Malish 7), this protein is Exodeoxyribonuclease 7 large subunit.